The sequence spans 359 residues: 3-dehydroquinate synthase (359 aa).

Residues 71 to 76 (DGEQFK), 105 to 109 (GVIGD), 129 to 130 (TT), lysine 142, lysine 151, and 169 to 172 (CLHT) each bind NAD(+). Glutamate 184, histidine 247, and histidine 264 together coordinate Zn(2+).

This sequence belongs to the sugar phosphate cyclases superfamily. Dehydroquinate synthase family. It depends on Co(2+) as a cofactor. Zn(2+) serves as cofactor. Requires NAD(+) as cofactor.

It localises to the cytoplasm. It carries out the reaction 7-phospho-2-dehydro-3-deoxy-D-arabino-heptonate = 3-dehydroquinate + phosphate. It participates in metabolic intermediate biosynthesis; chorismate biosynthesis; chorismate from D-erythrose 4-phosphate and phosphoenolpyruvate: step 2/7. Catalyzes the conversion of 3-deoxy-D-arabino-heptulosonate 7-phosphate (DAHP) to dehydroquinate (DHQ). This is 3-dehydroquinate synthase from Shewanella putrefaciens (strain CN-32 / ATCC BAA-453).